A 510-amino-acid polypeptide reads, in one-letter code: NAD(P)H-quinone oxidoreductase subunit 2 B, chloroplastic (510 aa).

A run of 13 helical transmembrane segments spans residues 24-44 (LLLF…GLIL), 57-77 (IPWL…ALLF), 99-119 (IFQF…VEYI), 124-144 (MAIT…MFLC), 149-169 (LITI…LSGY), 183-203 (YLLM…WLYG), 227-247 (PGIS…LSLA), 295-315 (WHLL…LIAI), 323-343 (MLAY…IVGD), 354-374 (YMLF…LFGL), 395-415 (ALSL…AGFF), 418-438 (LHLF…IGLL), and 484-504 (MIVC…IIAI).

It belongs to the complex I subunit 2 family. As to quaternary structure, NDH is composed of at least 16 different subunits, 5 of which are encoded in the nucleus.

Its subcellular location is the plastid. It localises to the chloroplast thylakoid membrane. The catalysed reaction is a plastoquinone + NADH + (n+1) H(+)(in) = a plastoquinol + NAD(+) + n H(+)(out). It catalyses the reaction a plastoquinone + NADPH + (n+1) H(+)(in) = a plastoquinol + NADP(+) + n H(+)(out). Its function is as follows. NDH shuttles electrons from NAD(P)H:plastoquinone, via FMN and iron-sulfur (Fe-S) centers, to quinones in the photosynthetic chain and possibly in a chloroplast respiratory chain. The immediate electron acceptor for the enzyme in this species is believed to be plastoquinone. Couples the redox reaction to proton translocation, and thus conserves the redox energy in a proton gradient. This Citrus sinensis (Sweet orange) protein is NAD(P)H-quinone oxidoreductase subunit 2 B, chloroplastic.